Here is a 710-residue protein sequence, read N- to C-terminus: NAD(P)H-quinone oxidoreductase subunit 5, chloroplastic (710 aa).

A run of 17 helical transmembrane segments spans residues 9–29, 40–60, 89–109, 125–145, 147–167, 185–205, 221–241, 258–278, 280–300, 327–347, 354–374, 396–416, 425–445, 519–539, 571–591, 657–676, and 689–709; these read WIIPFVPLLVPMLIGAGLLIF, WSFQSVLLLSIVMAFSIYLSI, IDPLTSIMSILVTTVGILVLI, FTYMSFFCAAMLGLVTSSNFI, IYIFWELVGLCSYLLIGFWFT, GDFGLLLGILGFYWITGSFEF, VNLLFVTLCAALLFVGAIAKS, TPISALIHAATLVAAGIFLVA, LLPLFLVIPYIMYFISLIGII, LGYMMVALGMGSYRSALFHLI, ALLFLAAGSVIHSMETIIGYS, GAFLLGTLSLCGIPPLACFWS, WLYSPIFALIAWGTVGLTAFY, MLFPQILLCFVTFVIGFLGIP, FLKHTVISGGIAYCGIFIAFL, SFDLRIIDQIFNCFAFLSFI, and IPFYLFFYFFFVSIFIFLFYK.

This sequence belongs to the complex I subunit 5 family. In terms of assembly, NDH is composed of at least 16 different subunits, 5 of which are encoded in the nucleus.

The protein localises to the plastid. It is found in the chloroplast thylakoid membrane. The enzyme catalyses a plastoquinone + NADH + (n+1) H(+)(in) = a plastoquinol + NAD(+) + n H(+)(out). The catalysed reaction is a plastoquinone + NADPH + (n+1) H(+)(in) = a plastoquinol + NADP(+) + n H(+)(out). Its function is as follows. NDH shuttles electrons from NAD(P)H:plastoquinone, via FMN and iron-sulfur (Fe-S) centers, to quinones in the photosynthetic chain and possibly in a chloroplast respiratory chain. The immediate electron acceptor for the enzyme in this species is believed to be plastoquinone. Couples the redox reaction to proton translocation, and thus conserves the redox energy in a proton gradient. This is NAD(P)H-quinone oxidoreductase subunit 5, chloroplastic (ndhF) from Ipomoea purpurea (Common morning glory).